Reading from the N-terminus, the 409-residue chain is Arginine/serine-rich coiled-coil protein 2 (409 aa).

Basic and acidic residues predominate over residues 1-31 (MASSDTERDGGSPEKHSPVTDKHLEHSDLAK). Residues 1–204 (MASSDTERDG…PSPPAFRGRN (204 aa)) form a disordered region. Over residues 34-50 (RGLKHYSKSRSRSREHK) the composition is skewed to basic residues. Residues 64-108 (RSKEARRHEVKEKSSKKHRPDDSIDRDHSDKVRERLNSSENGEER) are compositionally biased toward basic and acidic residues. Positions 109–191 (HRRKEKRSSR…KPRRHSRSRS (83 aa)) are enriched in basic residues. A coiled-coil region spans residues 204 to 244 (NTAMDAQEALARRLERAKKLQEQREKEMADKQKQQETVAVA).

Belongs to the RSRC2 family.

This is Arginine/serine-rich coiled-coil protein 2 (rsrc2) from Xenopus tropicalis (Western clawed frog).